The chain runs to 549 residues: Inner kinetochore subunit MIF2 (549 aa).

The tract at residues 47–275 is disordered; that stretch reads RKSRRKSSLF…RRQASDVVRT (229 aa). Polar residues-rich tracts occupy residues 56-65 and 96-108; these read FLPSTLNGDT and RSSLLSHQSNFLS. Over residues 114–124 the composition is skewed to acidic residues; it reads EPIEEEPEQEE. A compositionally biased stretch (polar residues) spans 151–163; the sequence is TRYSLDTSESPSV. The segment covering 203 to 225 has biased composition (acidic residues); it reads LLEDELEDDGFIPESEEDGDYIE. The segment covering 226 to 237 has biased composition (low complexity); sequence SDSSLDSGSDSA. A compositionally biased stretch (acidic residues) spans 238–262; it reads SDSDGDNTYQEVEEEAEVNTNDNED. Over residues 263-275 the composition is skewed to basic and acidic residues; sequence DYIRRQASDVVRT. Residue serine 325 is modified to Phosphoserine. Basic residues predominate over residues 335–345; the sequence is QRRKKQKKKPT. The tract at residues 335 to 374 is disordered; the sequence is QRRKKQKKKPTPTRPYNYVPTGRPRGRPKKDPNAKENLIP. The segment at residues 356–364 is a DNA-binding region (a.T hook); that stretch reads GRPRGRPKK.

This sequence belongs to the CENP-C/MIF2 family. As to quaternary structure, component of the inner kinetochore constitutive centromere-associated network (CCAN) (also known as central kinetochore CTF19 complex in yeast), which is composed of at least AME1, CHL4, CNN1, CTF3, CTF19, IML3, MCM16, MCM21, MCM22, MHF1, MHF2, MIF2, NKP1, NKP2, OKP1 and WIP1. Interacts with CBF1.

The protein resides in the nucleus. The protein localises to the chromosome. It localises to the centromere. It is found in the kinetochore. Its function is as follows. Component of the kinetochore, a multiprotein complex that assembles on centromeric DNA and attaches chromosomes to spindle microtubules, mediating chromosome segregation and sister chromatid segregation during meiosis and mitosis. Component of the inner kinetochore constitutive centromere-associated network (CCAN), which serves as a structural platform for outer kinetochore assembly. This Saccharomyces cerevisiae (strain ATCC 204508 / S288c) (Baker's yeast) protein is Inner kinetochore subunit MIF2 (MIF2).